Consider the following 357-residue polypeptide: Hydroxyproline O-arabinosyltransferase RDN1 (357 aa).

A helical; Signal-anchor transmembrane segment spans residues 13 to 33 (LLMLLMVLGFSFATYNLVFMM).

As to expression, expressed in the vasculature of leaves, petioles, stems and roots. Expressed in the vascular cylinder throughout the root, and nodule vasculature.

It localises to the golgi apparatus membrane. It catalyses the reaction trans-4-hydroxy-L-prolyl-[protein] + UDP-beta-L-arabinofuranose = O-(beta-L-arabinofuranosyl)-trans-4-hydroxy-L-prolyl-[protein] + UDP + H(+). Probable glycosyltransferase involved in the O-arabinosylation of several proteins including extensins and small signaling peptides. Catalyzes the transfer of the initial L-arabinose to the hydroxyl group of Hyp residues. Probably involved in the arabinosylation of CLE12, a signaling peptide that moves from root to shoot, to interact with SUNN receptor kinase signaling that regulates nodulation. Involved in long distance nodulation signaling events. Involved in the autoregulation of nodulation (AON), a long distance systemic signaling from root to shoot and back again, which allows legumes to limit the number of root nodules formed based on available nitrogen and previous rhizobial colonization. Functions in the root, upstream of the shoot receptor kinase SUNN and via CLE peptide, to control AON. In Medicago truncatula (Barrel medic), this protein is Hydroxyproline O-arabinosyltransferase RDN1.